Consider the following 251-residue polypeptide: Fibroblast growth factor-binding protein 1 (251 aa).

Residues 1–20 form the signal peptide; it reads MRLHSLILLSFLLLATQAFS. The interval 25–62 is disordered; sequence KRAKNAPHSTAEEGVEGSAPSLGKAQNKQRSRTSKSLT. 3 disulfides stabilise this stretch: C74/C91, C100/C133, and C109/C145. The tract at residues 160-189 is disordered; it reads NARGNTKPRKEKAEVSAREHNKVQEAVSTE. The segment covering 170–182 has biased composition (basic and acidic residues); sequence EKAEVSAREHNKV. Residue S175 is glycosylated (O-linked (GalNAc...) serine). A sufficient for interaction with FGF2 and FGF2-induced effects region spans residues 210–251; it reads RDPECLEDPDVLNQRKTALEFCGESWSSICTFFLNMLQATSC. 2 disulfides stabilise this stretch: C214–C251 and C231–C239.

This sequence belongs to the fibroblast growth factor-binding protein family. In terms of assembly, found in a complex with FGFBP1, FGF1 and FGF2. Interacts with FGF1, FGF7, FGF10, FGF22 and HSPG2. Interacts with FGF2. As to expression, expressed in intestine, ovary, lung, placenta and normal and wounded skin.

The protein localises to the secreted. The protein resides in the extracellular space. Its subcellular location is the cell membrane. Its function is as follows. Acts as a carrier protein that releases fibroblast-binding factors (FGFs) from the extracellular matrix (EM) storage and thus enhances the mitogenic activity of FGFs. Enhances FGF2 signaling during tissue repair, angiogenesis and in tumor growth. The protein is Fibroblast growth factor-binding protein 1 (Fgfbp1) of Mus musculus (Mouse).